Consider the following 189-residue polypeptide: Endoribonuclease YbeY (189 aa).

Residues 1 to 10 (MKERSSSPGT) show a composition bias toward polar residues. Positions 1 to 23 (MKERSSSPGTPDSGRRARPKPAK) are disordered. H141, H145, and H151 together coordinate Zn(2+).

Belongs to the endoribonuclease YbeY family. It depends on Zn(2+) as a cofactor.

Its subcellular location is the cytoplasm. Single strand-specific metallo-endoribonuclease involved in late-stage 70S ribosome quality control and in maturation of the 3' terminus of the 16S rRNA. In Nitrosospira multiformis (strain ATCC 25196 / NCIMB 11849 / C 71), this protein is Endoribonuclease YbeY.